We begin with the raw amino-acid sequence, 65 residues long: Large ribosomal subunit protein bL35 (65 aa).

Positions methionine 1 to lysine 23 are disordered. Residues alanine 10–lysine 23 are compositionally biased toward basic residues.

It belongs to the bacterial ribosomal protein bL35 family.

The chain is Large ribosomal subunit protein bL35 from Acidithiobacillus ferrooxidans (strain ATCC 53993 / BNL-5-31) (Leptospirillum ferrooxidans (ATCC 53993)).